Reading from the N-terminus, the 355-residue chain is Double-stranded RNA-binding protein 4 (355 aa).

DRBM domains lie at Val-4 to Pro-73 and Ala-82 to Asn-150. A compositionally biased stretch (polar residues) spans Lys-149–Val-188. A disordered region spans residues Lys-149 to Asp-193.

In terms of assembly, heterodimer with DRB1 or DRB5. Interacts with DCL4 and cauliflower mosaic virus (CaMV) transactivator/viroplasmin protein. Interaction with CaMV transactivator/viroplasmin protein inhibits RNA silencing ability of DRB4. Expressed in roots, leaf vasculature, shoot apical meristem (SAM) and developing anthers.

The protein resides in the nucleus. Double-stranded RNA-binding protein involved in RNA-mediated post-transcriptional gene silencing (PTGS). Functions in the trans-acting small interfering RNAs (ta-siRNAs) biogenesis by binding and assisting DICER-LIKE 4 (DCL4). Required for DCL4 activity. Required for the 21 nucleotide ta-siRNAs production of the TAS3 transcript in leaves but not in flowers. Plays an important role in silencing RNA of both DNA and RNA viruses. Involved with argonaute 7 (AGO7) and RDR6 in turnip crinkle virus (TCV) silencing. May not be directly involved in viral siRNA production. May stabilize the 21 nucleotide viral siRNAs and deliver them to the RISC complex. Targeted by the viral silencing suppressor (VSR) transactivator/viroplasmin (TAV) protein of the cauliflower mosaic virus (CaMV) that inactivates DRB4 function in RNA silencing. Probably not involved in the guide strand selection from RNA duplexes. Involved in leaf morphology through its function in ta-siRNA-mediated silencing. The protein is Double-stranded RNA-binding protein 4 (DBR4) of Arabidopsis thaliana (Mouse-ear cress).